A 244-amino-acid polypeptide reads, in one-letter code: Ribonuclease 3 (244 aa).

The RNase III domain occupies 21-148 (DHAPLLEAWG…MLGAIYLHHG (128 aa)). Glu61 provides a ligand contact to Mg(2+). The active site involves Asp65. 2 residues coordinate Mg(2+): Asp134 and Glu137. Glu137 is a catalytic residue. One can recognise a DRBM domain in the interval 175-242 (DWKTVLLEKL…AKQAVQKLNE (68 aa)).

Belongs to the ribonuclease III family. As to quaternary structure, homodimer. It depends on Mg(2+) as a cofactor.

It is found in the cytoplasm. The catalysed reaction is Endonucleolytic cleavage to 5'-phosphomonoester.. In terms of biological role, digests double-stranded RNA. Involved in the processing of primary rRNA transcript to yield the immediate precursors to the large and small rRNAs (23S and 16S). Processes some mRNAs, and tRNAs when they are encoded in the rRNA operon. Processes pre-crRNA and tracrRNA of type II CRISPR loci if present in the organism. The chain is Ribonuclease 3 from Corynebacterium jeikeium (strain K411).